Reading from the N-terminus, the 105-residue chain is Large ribosomal subunit protein bL21 (105 aa).

It belongs to the bacterial ribosomal protein bL21 family. As to quaternary structure, part of the 50S ribosomal subunit. Contacts protein L20.

Its function is as follows. This protein binds to 23S rRNA in the presence of protein L20. The polypeptide is Large ribosomal subunit protein bL21 (Methylobacterium nodulans (strain LMG 21967 / CNCM I-2342 / ORS 2060)).